The primary structure comprises 31 residues: Bacteriocin lactocin-705 (31 aa).

Its function is as follows. Antibacterial activity against several lactic acid bacteria, Listeria, Streptococci, etc. This is Bacteriocin lactocin-705 from Lacticaseibacillus paracasei (Lactobacillus paracasei).